The sequence spans 61 residues: Small ribosomal subunit protein uS14 (61 aa).

C24, C27, C40, and C43 together coordinate Zn(2+).

The protein belongs to the universal ribosomal protein uS14 family. Zinc-binding uS14 subfamily. Part of the 30S ribosomal subunit. Contacts proteins S3 and S10. The cofactor is Zn(2+).

Binds 16S rRNA, required for the assembly of 30S particles and may also be responsible for determining the conformation of the 16S rRNA at the A site. This is Small ribosomal subunit protein uS14 from Geobacter metallireducens (strain ATCC 53774 / DSM 7210 / GS-15).